The following is a 51-amino-acid chain: Lantibiotic flavucin (51 aa).

Residues Met-1–Gln-20 constitute a propeptide that is removed on maturation. Positions Ser-23–Cys-27 form a cross-link, lanthionine (Ser-Cys). Cross-links (beta-methyllanthionine (Thr-Cys)) lie at residues Thr-28 to Cys-31, Thr-33 to Cys-38, and Thr-42 to Cys-45.

It belongs to the type A lantibiotic family. Post-translationally, maturation of lantibiotics involves the enzymatic conversion of Thr, and Ser into dehydrated AA and the formation of thioether bonds with cysteine. This is followed by membrane translocation and cleavage of the modified precursor.

Antimicrobial activity depends on the dehydration degree and integrity of flavucin. Functionally, lanthionine-containing peptide antibiotic (lantibiotic) active on certain Gram-positive bacteria. The bactericidal activity of lantibiotics is based on depolarization of energized bacterial cytoplasmic membranes, initiated by the formation of aqueous transmembrane pores. Flavucin has high antimicrobial activity against several pathogenic bacteria such as S.aureus, E.faecalis, E.faecium and L.monocytogenes. Is also active against the Gram-negative P.aeruginosa. The sequence is that of Lantibiotic flavucin from Corynebacterium lipophiloflavum (strain ATCC 700352 / DSM 44291 / CCUG 37336 / JCM 10383 / DMMZ 1944).